Here is a 158-residue protein sequence, read N- to C-terminus: GTP-dependent dephospho-CoA kinase (158 aa).

GTP contacts are provided by Asp-35, Ile-36, Val-37, Asp-54, Lys-56, Glu-109, and Asp-132.

The protein belongs to the GTP-dependent DPCK family.

The enzyme catalyses 3'-dephospho-CoA + GTP = GDP + CoA + H(+). Its pathway is cofactor biosynthesis; coenzyme A biosynthesis. Its function is as follows. Catalyzes the GTP-dependent phosphorylation of the 3'-hydroxyl group of dephosphocoenzyme A to form coenzyme A (CoA). This is GTP-dependent dephospho-CoA kinase from Methanocaldococcus jannaschii (strain ATCC 43067 / DSM 2661 / JAL-1 / JCM 10045 / NBRC 100440) (Methanococcus jannaschii).